The primary structure comprises 314 residues: Mevalonate kinase (314 aa).

103-109 (GLGTSAA) contributes to the ATP binding site. Residue Asp-150 is the Proton acceptor of the active site.

The protein belongs to the GHMP kinase family. Mevalonate kinase subfamily. Homodimer. The cofactor is Mg(2+).

It localises to the cytoplasm. It carries out the reaction (R)-mevalonate + ATP = (R)-5-phosphomevalonate + ADP + H(+). It participates in isoprenoid biosynthesis; isopentenyl diphosphate biosynthesis via mevalonate pathway; isopentenyl diphosphate from (R)-mevalonate: step 1/3. Functionally, catalyzes the phosphorylation of (R)-mevalonate (MVA) to (R)-mevalonate 5-phosphate (MVAP). Functions in the mevalonate (MVA) pathway leading to isopentenyl diphosphate (IPP), a key precursor for the biosynthesis of isoprenoid compounds such as archaeal membrane lipids. In Saccharolobus solfataricus (strain ATCC 35092 / DSM 1617 / JCM 11322 / P2) (Sulfolobus solfataricus), this protein is Mevalonate kinase.